Here is a 102-residue protein sequence, read N- to C-terminus: Large ribosomal subunit protein bL21 (102 aa).

Belongs to the bacterial ribosomal protein bL21 family. In terms of assembly, part of the 50S ribosomal subunit. Contacts protein L20.

Functionally, this protein binds to 23S rRNA in the presence of protein L20. This Marinomonas sp. (strain MWYL1) protein is Large ribosomal subunit protein bL21.